A 750-amino-acid polypeptide reads, in one-letter code: Photosystem I P700 chlorophyll a apoprotein A1 (750 aa).

A run of 8 helical transmembrane segments spans residues 70–93 (VFSA…FHGA), 156–179 (LYCT…FHYH), 195–219 (LNHH…HVSL), 291–309 (IAHH…GHMY), 346–369 (WHAQ…HHMY), 385–411 (LSLF…IFMV), 433–455 (AIIS…LYIH), and 531–549 (FLVH…LILL). Positions 573 and 582 each coordinate [4Fe-4S] cluster. 2 helical membrane passes run 589-610 (HVFL…HFSW) and 664-686 (LSAY…MFLF). Residue His675 participates in chlorophyll a' binding. Chlorophyll a is bound by residues Met683 and Tyr691. Position 692 (Trp692) interacts with phylloquinone. A helical transmembrane segment spans residues 724–744 (AVGVTHYLLGGIATTWAFFLA).

It belongs to the PsaA/PsaB family. In terms of assembly, the PsaA/B heterodimer binds the P700 chlorophyll special pair and subsequent electron acceptors. PSI consists of a core antenna complex that captures photons, and an electron transfer chain that converts photonic excitation into a charge separation. The eukaryotic PSI reaction center is composed of at least 11 subunits. P700 is a chlorophyll a/chlorophyll a' dimer, A0 is one or more chlorophyll a, A1 is one or both phylloquinones and FX is a shared 4Fe-4S iron-sulfur center. serves as cofactor.

The protein resides in the plastid. The protein localises to the chloroplast thylakoid membrane. The catalysed reaction is reduced [plastocyanin] + hnu + oxidized [2Fe-2S]-[ferredoxin] = oxidized [plastocyanin] + reduced [2Fe-2S]-[ferredoxin]. Functionally, psaA and PsaB bind P700, the primary electron donor of photosystem I (PSI), as well as the electron acceptors A0, A1 and FX. PSI is a plastocyanin-ferredoxin oxidoreductase, converting photonic excitation into a charge separation, which transfers an electron from the donor P700 chlorophyll pair to the spectroscopically characterized acceptors A0, A1, FX, FA and FB in turn. Oxidized P700 is reduced on the lumenal side of the thylakoid membrane by plastocyanin. The polypeptide is Photosystem I P700 chlorophyll a apoprotein A1 (Olimarabidopsis pumila (Dwarf rocket)).